Here is an 881-residue protein sequence, read N- to C-terminus: Phosphoenolpyruvate carboxylase (881 aa).

Catalysis depends on residues His138 and Lys545.

Belongs to the PEPCase type 1 family. It depends on Mg(2+) as a cofactor.

The enzyme catalyses oxaloacetate + phosphate = phosphoenolpyruvate + hydrogencarbonate. Forms oxaloacetate, a four-carbon dicarboxylic acid source for the tricarboxylic acid cycle. The polypeptide is Phosphoenolpyruvate carboxylase (Shewanella oneidensis (strain ATCC 700550 / JCM 31522 / CIP 106686 / LMG 19005 / NCIMB 14063 / MR-1)).